The primary structure comprises 189 residues: Isopentenyl-diphosphate Delta-isomerase (189 aa).

Mn(2+) contacts are provided by His-27 and His-34. A Nudix hydrolase domain is found at 32 to 171 (PLHFAFSTYI…PFVFSPWMVD (140 aa)). Cys-69 is a catalytic residue. His-71 is a Mn(2+) binding site. Glu-89 provides a ligand contact to Mg(2+). Positions 119 and 121 each coordinate Mn(2+). Glu-121 is a catalytic residue.

Belongs to the IPP isomerase type 1 family. It depends on Mg(2+) as a cofactor. Requires Mn(2+) as cofactor.

The protein localises to the cytoplasm. It catalyses the reaction isopentenyl diphosphate = dimethylallyl diphosphate. It functions in the pathway isoprenoid biosynthesis; dimethylallyl diphosphate biosynthesis; dimethylallyl diphosphate from isopentenyl diphosphate: step 1/1. Functionally, catalyzes the 1,3-allylic rearrangement of the homoallylic substrate isopentenyl (IPP) to its highly electrophilic allylic isomer, dimethylallyl diphosphate (DMAPP). The sequence is that of Isopentenyl-diphosphate Delta-isomerase from Corynebacterium glutamicum (strain R).